Here is a 20-residue protein sequence, read N- to C-terminus: Superoxide dismutase [Fe] (20 aa).

This sequence belongs to the iron/manganese superoxide dismutase family. As to quaternary structure, homodimer. Fe cation serves as cofactor.

The protein localises to the periplasm. The enzyme catalyses 2 superoxide + 2 H(+) = H2O2 + O2. Destroys superoxide anion radicals which are normally produced within the cells and which are toxic to biological systems. The chain is Superoxide dismutase [Fe] (sodB) from Photobacterium damsela subsp. piscicida (Pasteurella piscicida).